Here is a 124-residue protein sequence, read N- to C-terminus: Holo-[acyl-carrier-protein] synthase (124 aa).

Mg(2+)-binding residues include Asp-8 and Glu-55.

The protein belongs to the P-Pant transferase superfamily. AcpS family. Mg(2+) is required as a cofactor.

The protein resides in the cytoplasm. It catalyses the reaction apo-[ACP] + CoA = holo-[ACP] + adenosine 3',5'-bisphosphate + H(+). In terms of biological role, transfers the 4'-phosphopantetheine moiety from coenzyme A to a Ser of acyl-carrier-protein. This chain is Holo-[acyl-carrier-protein] synthase, found in Desulfovibrio desulfuricans (strain ATCC 27774 / DSM 6949 / MB).